The sequence spans 404 residues: Protein translocase subunit SecF (404 aa).

Transmembrane regions (helical) follow at residues 15–35 (KWYFLAFSLVFSVAGLISMGA), 225–245 (LLATLYSLGGMLVYLWFRFEL), 246–266 (IYGIGAVVACFHDTIITVGAF), 275–295 (LTVVAAILTLIGYSMNDTIVV), 327–347 (ILTSGLTFLTVLSLYVFGGEV), and 355–375 (LVIGILIGTYSSIAVAAPMLV).

The protein belongs to the SecD/SecF family. SecF subfamily. As to quaternary structure, forms a complex with SecD. Part of the essential Sec protein translocation apparatus which comprises SecA, SecYEG and auxiliary proteins SecDF. Other proteins may also be involved.

It is found in the cell inner membrane. In terms of biological role, part of the Sec protein translocase complex. Interacts with the SecYEG preprotein conducting channel. SecDF uses the proton motive force (PMF) to complete protein translocation after the ATP-dependent function of SecA. This Koribacter versatilis (strain Ellin345) protein is Protein translocase subunit SecF.